Reading from the N-terminus, the 141-residue chain is Small ribosomal subunit protein uS19 (141 aa).

Belongs to the universal ribosomal protein uS19 family.

Functionally, protein S19 forms a complex with S13 that binds strongly to the 16S ribosomal RNA. This chain is Small ribosomal subunit protein uS19, found in Thermofilum pendens (strain DSM 2475 / Hrk 5).